Consider the following 236-residue polypeptide: Ribonuclease 3 (236 aa).

Residues 13–138 form the RNase III domain; sequence TEKVFKISGY…LIGAIYVDGG (126 aa). E51 contributes to the Mg(2+) binding site. D55 is a catalytic residue. Mg(2+)-binding residues include N124 and E127. E127 is a catalytic residue. A DRBM domain is found at 164–232; sequence DAKTALQEWA…AKLMLEKVTK (69 aa).

It belongs to the ribonuclease III family. In terms of assembly, homodimer. The cofactor is Mg(2+).

It localises to the cytoplasm. The enzyme catalyses Endonucleolytic cleavage to 5'-phosphomonoester.. Functionally, digests double-stranded RNA. Involved in the processing of primary rRNA transcript to yield the immediate precursors to the large and small rRNAs (23S and 16S). Processes some mRNAs, and tRNAs when they are encoded in the rRNA operon. Processes pre-crRNA and tracrRNA of type II CRISPR loci if present in the organism. The protein is Ribonuclease 3 of Anaplasma phagocytophilum (strain HZ).